We begin with the raw amino-acid sequence, 562 residues long: Glucocorticoid modulatory element-binding protein 1 (562 aa).

Position 2 is an N-acetylalanine (A2). Residues 72 to 156 (ASSIEGNEDM…RKMMDSGQID (85 aa)) enclose the SAND domain. Zn(2+) is bound at residue C103. DNA contacts are provided by K129, K133, K136, and R147. Zn(2+) contacts are provided by H160, C164, and C168. The stretch at 311–355 (LDNRRKQVEQGEEQFLYTLADLERQLEEQKKQAQDPRLKSQTVQN) forms a coiled coil. A disordered region spans residues 360–384 (PVSTPKPPKRPRLQRPASTTVLSPS). Positions 375–384 (PASTTVLSPS) are enriched in polar residues.

As to quaternary structure, homodimer, and heterodimer of GMEB1 and GMEB2. Interacts with TRIM63. Interacts with the glucocorticoid receptor (NR3C1) and NCOA2/TIF2. May interact with HSP27 and CREB-binding protein (CBP). In terms of tissue distribution, ubiquitous. Low levels were detected in heart, brain, spleen, lung, liver, skeletal muscle, kidney and testis.

It is found in the nucleus. It localises to the cytoplasm. Trans-acting factor that binds to glucocorticoid modulatory elements (GME) present in the TAT (tyrosine aminotransferase) promoter and increases sensitivity to low concentrations of glucocorticoids. Also binds to the transferrin receptor promoter. This is Glucocorticoid modulatory element-binding protein 1 (Gmeb1) from Mus musculus (Mouse).